The chain runs to 172 residues: Shikimate kinase (172 aa).

An ATP-binding site is contributed by 11-16 (GTGKTA). Thr-15 serves as a coordination point for Mg(2+). Asp-33, Arg-57, and Gly-79 together coordinate substrate. Arg-117 contributes to the ATP binding site. Arg-136 provides a ligand contact to substrate.

This sequence belongs to the shikimate kinase family. Monomer. The cofactor is Mg(2+).

The protein localises to the cytoplasm. It catalyses the reaction shikimate + ATP = 3-phosphoshikimate + ADP + H(+). It functions in the pathway metabolic intermediate biosynthesis; chorismate biosynthesis; chorismate from D-erythrose 4-phosphate and phosphoenolpyruvate: step 5/7. In terms of biological role, catalyzes the specific phosphorylation of the 3-hydroxyl group of shikimic acid using ATP as a cosubstrate. The sequence is that of Shikimate kinase from Pelotomaculum thermopropionicum (strain DSM 13744 / JCM 10971 / SI).